The sequence spans 1162 residues: Glycerophosphocholine phosphodiesterase GDE1 (1162 aa).

An SPX domain is found at 1 to 155 (MKFGKTYVTH…TSILSQHSGV (155 aa)). ANK repeat units follow at residues 346-375 (YHRT…KWGL), 392-421 (EGLT…AQTL), 423-452 (CPNL…DVNY), 458-487 (RNET…NTEI), 492-521 (FGWT…SYDI), and 525-554 (SGWL…KLLL). Positions 817–1146 (TRVIGHRGLG…DSVLAVREGL (330 aa)) constitute a GP-PDE domain.

Belongs to the GDE1 family.

Its subcellular location is the cytoplasm. It catalyses the reaction sn-glycerol 3-phosphocholine + H2O = sn-glycerol 3-phosphate + choline + H(+). Glycerophosphocholine glycerophosphodiesterase responsible for the hydrolysis of intracellular glycerophosphocholine into glycerol-phosphate and choline. The choline is used for phosphatidyl-choline synthesis. Required for utilization of glycerophosphocholine as phosphate source. C.albicans can utilize GroPCho through transport and intracellular hydrolysis or through extracellular hydrolysis. This is Glycerophosphocholine phosphodiesterase GDE1 from Candida albicans (strain SC5314 / ATCC MYA-2876) (Yeast).